The sequence spans 221 residues: Endonuclease V (221 aa).

The Mg(2+) site is built by Asp-44 and Asp-112.

The protein belongs to the endonuclease V family. Requires Mg(2+) as cofactor.

Its subcellular location is the cytoplasm. It carries out the reaction Endonucleolytic cleavage at apurinic or apyrimidinic sites to products with a 5'-phosphate.. Its function is as follows. DNA repair enzyme involved in the repair of deaminated bases. Selectively cleaves double-stranded DNA at the second phosphodiester bond 3' to a deoxyinosine leaving behind the intact lesion on the nicked DNA. This is Endonuclease V from Nostoc punctiforme (strain ATCC 29133 / PCC 73102).